Here is a 263-residue protein sequence, read N- to C-terminus: MRNLPIGVFDSGVGGLTVARAILDLLPHEPLYYVADTAHFPYGTKSIAEVRQYGLAVLDRMVADGVKLLVIACNSASSALLRDARERYDVPVVEVIQPAVRKAVSATRNGKVGVIGTPATIASMAYDDAFAAAPHVDLTTAACPRFVEFVEAGITMSDELLECAKEYLAPIVERGCDTLILGCTHYPFLAGAIALVVGDEVMLVSSADETARDVYRVLVSRGLTRPASAPPPVHRFAATGDPEPFSRLGRRFLGPEIGHVTTL.

Substrate is bound by residues 10–11 (DS) and 42–43 (YG). The Proton donor/acceptor role is filled by Cys-73. Substrate is bound at residue 74–75 (NS). Residue Cys-183 is the Proton donor/acceptor of the active site. 184–185 (TH) is a binding site for substrate.

The protein belongs to the aspartate/glutamate racemases family.

It catalyses the reaction L-glutamate = D-glutamate. Its pathway is cell wall biogenesis; peptidoglycan biosynthesis. Functionally, provides the (R)-glutamate required for cell wall biosynthesis. The sequence is that of Glutamate racemase from Acidothermus cellulolyticus (strain ATCC 43068 / DSM 8971 / 11B).